The sequence spans 931 residues: Netrin receptor UNC5C (931 aa).

Positions 1-40 (MRKGLRATAARCGLGLGYLLQMLVLPALALLSASGTGSAA) are cleaved as a signal peptide. Topologically, residues 41-380 (QDDDFFHELP…APDSDDVALY (340 aa)) are extracellular. An Ig-like domain is found at 62 to 159 (PHFLIEPEEA…AGTTKSRKAY (98 aa)). 9 cysteine pairs are disulfide-bonded: Cys-83/Cys-144, Cys-95/Cys-142, Cys-188/Cys-239, Cys-272/Cys-309, Cys-276/Cys-313, Cys-287/Cys-299, Cys-328/Cys-362, Cys-332/Cys-367, and Cys-340/Cys-352. The 96-residue stretch at 161-256 (RIAYLRKTFE…KRKSTTATVI (96 aa)) folds into the Ig-like C2-type domain. A glycan (N-linked (GlcNAc...) asparagine) is linked at Asn-236. TSP type-1 domains are found at residues 260–314 (NGGW…TLCP) and 316–368 (DGRW…GLCM). An N-linked (GlcNAc...) asparagine glycan is attached at Asn-361. A helical membrane pass occupies residues 381–401 (VGIVIAVTVCLAITVVVALFV). At 402-931 (YRKNHRDFES…VVSLAAEGQY (530 aa)) the chain is on the cytoplasmic side. The interval 402 to 931 (YRKNHRDFES…VVSLAAEGQY (530 aa)) is required for netrin-mediated axon repulsion of neuronal growth cones. The residue at position 502 (Ser-502) is a Phosphoserine. The region spanning 530–673 (CTAFGTFNSL…LSTYALVGQS (144 aa)) is the ZU5 domain. Tyr-568 is modified (phosphotyrosine). An interaction with DCC region spans residues 694–712 (SLEYSIRVYCLDDTQDALK). Residues 850–929 (QKLCSSLDAP…ETVVSLAAEG (80 aa)) form the Death domain.

Belongs to the unc-5 family. In terms of assembly, interacts with DCC (via cytoplasmic domain). Interacts (tyrosine phosphorylated form) with PTPN11. Interacts (via extracellular domain) with FLRT3 (via extracellular domain). Interacts (via Ig-like C2-type domain) with DSCAM (via extracellular domain). Interacts (via death domain) with DAPK1. Interacts (via cytoplasmic domain) with TUBB3; this interaction is decreased by NTN1/Netrin-1. In terms of processing, proteolytically cleaved by caspases during apoptosis. The cleavage does not take place when the receptor is associated with netrin ligand. Its cleavage by caspases is required to induce apoptosis. Phosphorylated on different cytoplasmic tyrosine residues. Phosphorylation of Tyr-568 leads to an interaction with PTPN11 phosphatase, suggesting that its activity is regulated by phosphorylation/dephosphorylation. Tyrosine phosphorylation is netrin-dependent. Detected in brain (at protein level). Mainly expressed in brain. Also expressed in kidney. Not expressed in developing or adult lung.

The protein resides in the cell membrane. It is found in the cell surface. The protein localises to the synapse. Its subcellular location is the synaptosome. It localises to the cell projection. The protein resides in the axon. It is found in the dendrite. The protein localises to the growth cone. Its subcellular location is the lamellipodium. It localises to the filopodium. Its function is as follows. Receptor for netrin required for axon guidance. Mediates axon repulsion of neuronal growth cones in the developing nervous system upon ligand binding. NTN1/Netrin-1 binding might cause dissociation of UNC5C from polymerized TUBB3 in microtubules and thereby lead to increased microtubule dynamics and axon repulsion. Axon repulsion in growth cones may also be caused by its association with DCC that may trigger signaling for repulsion. Might also collaborate with DSCAM in NTN1-mediated axon repulsion independently of DCC. Also involved in corticospinal tract axon guidance independently of DCC. Involved in dorsal root ganglion axon projection towards the spinal cord. It also acts as a dependence receptor required for apoptosis induction when not associated with netrin ligand. This Rattus norvegicus (Rat) protein is Netrin receptor UNC5C (Unc5c).